A 206-amino-acid polypeptide reads, in one-letter code: Small ribosomal subunit protein uS4 (206 aa).

A disordered region spans residues 15–46 (MGENIWGRPKSPVNKREYGPGQHGQRRKNKLS). One can recognise an S4 RNA-binding domain in the interval 94–157 (RRLDAIVYRA…RQLAIVLEAT (64 aa)).

The protein belongs to the universal ribosomal protein uS4 family. As to quaternary structure, part of the 30S ribosomal subunit. Contacts protein S5. The interaction surface between S4 and S5 is involved in control of translational fidelity.

Functionally, one of the primary rRNA binding proteins, it binds directly to 16S rRNA where it nucleates assembly of the body of the 30S subunit. With S5 and S12 plays an important role in translational accuracy. This is Small ribosomal subunit protein uS4 from Cereibacter sphaeroides (strain ATCC 17025 / ATH 2.4.3) (Rhodobacter sphaeroides).